A 369-amino-acid chain; its full sequence is Histidinol-phosphate aminotransferase 2 (369 aa).

N6-(pyridoxal phosphate)lysine is present on Lys231.

It belongs to the class-II pyridoxal-phosphate-dependent aminotransferase family. Histidinol-phosphate aminotransferase subfamily. Homodimer. Pyridoxal 5'-phosphate is required as a cofactor.

It carries out the reaction L-histidinol phosphate + 2-oxoglutarate = 3-(imidazol-4-yl)-2-oxopropyl phosphate + L-glutamate. It functions in the pathway amino-acid biosynthesis; L-histidine biosynthesis; L-histidine from 5-phospho-alpha-D-ribose 1-diphosphate: step 7/9. The polypeptide is Histidinol-phosphate aminotransferase 2 (Legionella pneumophila (strain Lens)).